The primary structure comprises 307 residues: Regulating synaptic membrane exocytosis protein 3 (307 aa).

Residues 86–120 are disordered; it reads STETGIAVEMRSRVTRQGSRESTDGSTNSNSSEGT. The span at 109 to 119 shows a compositional bias: polar residues; the sequence is DGSTNSNSSEG. The C2 domain occupies 155 to 273; the sequence is PMGDVHIAIM…DLSAVVTGWY (119 aa). Phosphoserine is present on residues S294 and S297.

Binds PPFIA3. Does not bind RAB3. In terms of tissue distribution, expressed exclusively in brain with significant levels in cortex, cerebellum and olfactory bulb. Detected at lower level in hippocampus.

The protein resides in the synapse. Its function is as follows. Regulates synaptic membrane exocytosis. In Rattus norvegicus (Rat), this protein is Regulating synaptic membrane exocytosis protein 3 (Rims3).